The chain runs to 430 residues: Hemagglutinin-esterase (430 aa).

The first 27 residues, 1 to 27 (MLRMRVRPPSAIPVFLIFVLLPFVLTS), serve as a signal peptide directing secretion. The segment at 16–133 (LIFVLLPFVL…GSFGWVSNKV (118 aa)) is esterase domain first part. The Virion surface segment spans residues 28–404 (KPITPHYGPG…ENVDVTSSAY (377 aa)). The Nucleophile role is filled by serine 49. A disulfide bridge links cysteine 53 with cysteine 69. N-linked (GlcNAc...) asparagine; by host glycans are attached at residues asparagine 88, asparagine 117, asparagine 159, asparagine 165, asparagine 247, asparagine 268, and asparagine 289. 3 disulfides stabilise this stretch: cysteine 120–cysteine 168, cysteine 207–cysteine 284, and cysteine 215–cysteine 257. The receptor binding stretch occupies residues 134–274 (GFYSKLYSMA…GVYNATTFGK (141 aa)). An esterase domain second part region spans residues 275-390 (FLIYPTKSYC…SCPQYYKLFE (116 aa)). An intrachain disulfide couples cysteine 315 to cysteine 320. Asparagine 324 carries N-linked (GlcNAc...) asparagine; by host glycosylation. Active-site charge relay system residues include aspartate 336 and histidine 339. Residue asparagine 354 is glycosylated (N-linked (GlcNAc...) asparagine; by host). Cysteine 357 and cysteine 382 are joined by a disulfide. Residues 405–425 (FVATWVLLVLVIILIFILISF) traverse the membrane as a helical segment. Topologically, residues 426–430 (CLSSY) are intravirion.

The protein belongs to the influenza type C/coronaviruses hemagglutinin-esterase family. In terms of processing, N-glycosylated.

The protein resides in the virion membrane. Its subcellular location is the host cell membrane. The enzyme catalyses N-acetyl-9-O-acetylneuraminate + H2O = N-acetylneuraminate + acetate + H(+). The catalysed reaction is N-acetyl-4-O-acetylneuraminate + H2O = N-acetylneuraminate + acetate + H(+). Functionally, structural protein that makes short spikes at the surface of the virus. Contains receptor binding and receptor-destroying activities. Mediates de-O-acetylation of N-acetyl-9-O-acetylneuraminic acid, which is probably the receptor determinant recognized by the virus on the surface of erythrocytes and susceptible cells. This receptor-destroying activity is important for virus release as it probably helps preventing self-aggregation and ensures the efficient spread of the progeny virus from cell to cell. May serve as a secondary viral attachment protein for initiating infection, the spike protein being the major one. Seems to be a 'luxury' protein that is not absolutely necessary for virus infection in culture. However, its presence in the virus may alter its pathogenicity. May become a target for both the humoral and the cellular branches of the immune system. The sequence is that of Hemagglutinin-esterase (HE) from Porcine torovirus (strain P10) (PoTV).